The chain runs to 441 residues: Ribulose bisphosphate carboxylase large chain (441 aa).

Substrate contacts are provided by Asn-89 and Thr-139. The active-site Proton acceptor is Lys-141. Residue Lys-143 coordinates substrate. The Mg(2+) site is built by Lys-167, Asp-169, and Glu-170. An N6-carboxylysine modification is found at Lys-167. The Proton acceptor role is filled by His-260. The substrate site is built by Arg-261, His-293, and Ser-345.

Belongs to the RuBisCO large chain family. Type I subfamily. Heterohexadecamer of 8 large chains and 8 small chains; disulfide-linked. The disulfide link is formed within the large subunit homodimers. Requires Mg(2+) as cofactor. The disulfide bond which can form in the large chain dimeric partners within the hexadecamer appears to be associated with oxidative stress and protein turnover.

It is found in the plastid. The protein localises to the chloroplast. The catalysed reaction is 2 (2R)-3-phosphoglycerate + 2 H(+) = D-ribulose 1,5-bisphosphate + CO2 + H2O. The enzyme catalyses D-ribulose 1,5-bisphosphate + O2 = 2-phosphoglycolate + (2R)-3-phosphoglycerate + 2 H(+). RuBisCO catalyzes two reactions: the carboxylation of D-ribulose 1,5-bisphosphate, the primary event in carbon dioxide fixation, as well as the oxidative fragmentation of the pentose substrate in the photorespiration process. Both reactions occur simultaneously and in competition at the same active site. In Coriandrum sativum (Coriander), this protein is Ribulose bisphosphate carboxylase large chain.